We begin with the raw amino-acid sequence, 221 residues long: Telomere repeats-binding bouquet formation protein 2 (221 aa).

It belongs to the TERB2 family. In terms of assembly, component of the MAJIN-TERB1-TERB2 complex, composed of MAJIN, TERB1 and TERB2.

It is found in the chromosome. The protein localises to the telomere. Its subcellular location is the nucleus inner membrane. Functionally, meiosis-specific telomere-associated protein involved in meiotic telomere attachment to the nucleus inner membrane, a crucial step for homologous pairing and synapsis. Component of the MAJIN-TERB1-TERB2 complex, which promotes telomere cap exchange by mediating attachment of telomeric DNA to the inner nuclear membrane and replacement of the protective cap of telomeric chromosomes: in early meiosis, the MAJIN-TERB1-TERB2 complex associates with telomeric DNA and the shelterin/telosome complex. During prophase, the complex matures and promotes release of the shelterin/telosome complex from telomeric DNA. In Bos taurus (Bovine), this protein is Telomere repeats-binding bouquet formation protein 2.